We begin with the raw amino-acid sequence, 356 residues long: Alanine racemase, catabolic (356 aa).

The active-site Proton acceptor; specific for D-alanine is Lys-35. N6-(pyridoxal phosphate)lysine is present on Lys-35. Arg-130 serves as a coordination point for substrate. Residue Tyr-253 is the Proton acceptor; specific for L-alanine of the active site. Met-301 contributes to the substrate binding site.

Belongs to the alanine racemase family. As to quaternary structure, monomer. Pyridoxal 5'-phosphate is required as a cofactor.

It catalyses the reaction L-alanine = D-alanine. With respect to regulation, inactivated by D- and L-beta-fluoroalanine, D- and L-beta-chloroalanine, and O-acetyl-D-serine. Isomerizes L-alanine to D-alanine which is then oxidized to pyruvate by DadA. The sequence is that of Alanine racemase, catabolic (dadX) from Salmonella typhimurium (strain LT2 / SGSC1412 / ATCC 700720).